The chain runs to 376 residues: Actin-related protein T1 (376 aa).

Belongs to the actin family.

It localises to the cytoplasm. It is found in the cytoskeleton. Its subcellular location is the nucleus. The protein localises to the cytoplasmic vesicle. The protein resides in the secretory vesicle. It localises to the acrosome. Functionally, negatively regulates the Hedgehog (SHH) signaling. Binds to the promoter of the SHH signaling mediator, GLI1, and inhibits its expression. This is Actin-related protein T1 (Actrt1) from Mus musculus (Mouse).